Reading from the N-terminus, the 867-residue chain is Ent-copalyl diphosphate synthase 1, chloroplastic (867 aa).

Residues 1 to 35 (MIHLHSPPTAPAAFGGAGSADWRRRRRWSWSSSSR) constitute a chloroplast transit peptide. The interval 1–134 (MIHLHSPPTA…ADEEADDELQ (134 aa)) is disordered. Positions 51-64 (RGGDDGGGEDHHAD) are enriched in basic and acidic residues. The segment covering 74–89 (AWRARATTAGVSSSSS) has biased composition (low complexity). A compositionally biased stretch (basic and acidic residues) spans 99–121 (IEHETPRITKWPNESRDLDDHQQ). The span at 124–133 (EADEEADDEL) shows a compositional bias: acidic residues. K286 contributes to the substrate binding site. The DXDD motif motif lies at 418–421 (EVDD). K504 contacts substrate.

Belongs to the terpene synthase family. It depends on Mg(2+) as a cofactor.

The protein localises to the plastid. The protein resides in the chloroplast. The enzyme catalyses (2E,6E,10E)-geranylgeranyl diphosphate = ent-copalyl diphosphate. Its pathway is plant hormone biosynthesis; gibberellin biosynthesis. Functionally, catalyzes the conversion of geranylgeranyl diphosphate to the gibberellin precursor ent-copalyl diphosphate. The protein is Ent-copalyl diphosphate synthase 1, chloroplastic (CPS1) of Oryza sativa subsp. japonica (Rice).